Reading from the N-terminus, the 237-residue chain is Protein GrpE (237 aa).

Disordered regions lie at residues 24–56 (LILEDSEAEAGTSSGETAAEPSPDPGEALKQLQ) and 204–237 (SAGSPSSEPSPPAQATIEAGPENTPASPQNPQPS).

This sequence belongs to the GrpE family. As to quaternary structure, homodimer.

It localises to the cytoplasm. In terms of biological role, participates actively in the response to hyperosmotic and heat shock by preventing the aggregation of stress-denatured proteins, in association with DnaK and GrpE. It is the nucleotide exchange factor for DnaK and may function as a thermosensor. Unfolded proteins bind initially to DnaJ; upon interaction with the DnaJ-bound protein, DnaK hydrolyzes its bound ATP, resulting in the formation of a stable complex. GrpE releases ADP from DnaK; ATP binding to DnaK triggers the release of the substrate protein, thus completing the reaction cycle. Several rounds of ATP-dependent interactions between DnaJ, DnaK and GrpE are required for fully efficient folding. The polypeptide is Protein GrpE (Synechococcus sp. (strain JA-2-3B'a(2-13)) (Cyanobacteria bacterium Yellowstone B-Prime)).